Consider the following 121-residue polypeptide: Small ribosomal subunit protein bS16m (121 aa).

Belongs to the bacterial ribosomal protein bS16 family. In terms of assembly, component of the mitochondrial small ribosomal subunit (mt-SSU). Mature yeast 74S mitochondrial ribosomes consist of a small (37S) and a large (54S) subunit. The 37S small subunit contains a 15S ribosomal RNA (15S mt-rRNA) and 34 different proteins. The 54S large subunit contains a 21S rRNA (21S mt-rRNA) and 46 different proteins.

Its subcellular location is the mitochondrion. Functionally, component of the mitochondrial ribosome (mitoribosome), a dedicated translation machinery responsible for the synthesis of mitochondrial genome-encoded proteins, including at least some of the essential transmembrane subunits of the mitochondrial respiratory chain. The mitoribosomes are attached to the mitochondrial inner membrane and translation products are cotranslationally integrated into the membrane. This chain is Small ribosomal subunit protein bS16m (MRPS16), found in Saccharomyces cerevisiae (strain ATCC 204508 / S288c) (Baker's yeast).